The sequence spans 88 residues: Small ribosomal subunit protein bS20 (88 aa).

Residues 1-27 (MANIPSAKKRARQAEKRRKHNQSQRSM) form a disordered region. The segment covering 7 to 22 (AKKRARQAEKRRKHNQ) has biased composition (basic residues).

Belongs to the bacterial ribosomal protein bS20 family.

Binds directly to 16S ribosomal RNA. This chain is Small ribosomal subunit protein bS20, found in Alkalilimnicola ehrlichii (strain ATCC BAA-1101 / DSM 17681 / MLHE-1).